The primary structure comprises 119 residues: Large ribosomal subunit protein uL18 (119 aa).

Belongs to the universal ribosomal protein uL18 family. In terms of assembly, part of the 50S ribosomal subunit; part of the 5S rRNA/L5/L18/L25 subcomplex. Contacts the 5S and 23S rRNAs.

Functionally, this is one of the proteins that bind and probably mediate the attachment of the 5S RNA into the large ribosomal subunit, where it forms part of the central protuberance. This Paracoccus denitrificans (strain Pd 1222) protein is Large ribosomal subunit protein uL18.